The chain runs to 386 residues: Patatin-15 (386 aa).

Residues 1 to 23 form the signal peptide; sequence MATTKSFLILFFMILATTSSTCA. Residues 32 to 229 enclose the PNPLA domain; it reads LSIDGGGIKG…TVGDPALLSL (198 aa). The GXGXXG motif lies at 36 to 41; sequence GGGIKG. The GXSXG motif lies at 75 to 79; that stretch reads GTSTG. Ser77 functions as the Nucleophile in the catalytic mechanism. N-linked (GlcNAc...) asparagine glycosylation is present at Asn115. The active-site Proton acceptor is the Asp215. The short motif at 215-217 is the DGA/G element; that stretch reads DGG. The stretch at 321 to 384 forms a coiled coil; that stretch reads ENALTGTTTE…DRKKLRANKA (64 aa).

This sequence belongs to the patatin family. Tuber.

It is found in the vacuole. Its function is as follows. Probable lipolytic acyl hydrolase (LAH), an activity which is thought to be involved in the response of tubers to pathogens. The polypeptide is Patatin-15 (Solanum tuberosum (Potato)).